The primary structure comprises 538 residues: indole-2-monooxygenase (538 aa).

The helical transmembrane segment at 22-42 threads the bilayer; that stretch reads ALLLAIPFSLLLLPLLLRYLA. Cysteine 481 contacts heme.

It belongs to the cytochrome P450 family. Heme serves as cofactor.

The protein resides in the membrane. The catalysed reaction is indole + reduced [NADPH--hemoprotein reductase] + O2 = indolin-2-one + oxidized [NADPH--hemoprotein reductase] + H2O + H(+). Its pathway is secondary metabolite biosynthesis; 2,4-dihydroxy-1,4-benzoxazin-3-one biosynthesis; 2,4-dihydroxy-1,4-benzoxazin-3-one from indoleglycerol phosphate: step 2/5. Catalyzes the conversion of indole to indolin-2-one. This chain is indole-2-monooxygenase (CYP71C4), found in Zea mays (Maize).